A 96-amino-acid chain; its full sequence is MPGKIAVEVAYALPEKQYLQRVSLQEGATVEEAIRASGLLELRTDIDLTKNKVGIYSRPTKLSDTVHDGDRVEIYRPLIADPKELRRQRAEKSANK.

It belongs to the UPF0125 (RnfH) family.

This is Protein RnfH from Escherichia fergusonii (strain ATCC 35469 / DSM 13698 / CCUG 18766 / IAM 14443 / JCM 21226 / LMG 7866 / NBRC 102419 / NCTC 12128 / CDC 0568-73).